Reading from the N-terminus, the 463-residue chain is Golgi-associated PDZ and coiled-coil motif-containing protein (463 aa).

N-acetylserine is present on Ser-2. The stretch at 85–201 (AQTVSQINHK…RHIAVLQAEV (117 aa)) forms a coiled coil. Positions 289 to 372 (KVLLLKEDHE…EIEFEVVYVA (84 aa)) constitute a PDZ domain. Ser-402 and Ser-405 each carry phosphoserine.

In terms of assembly, homooligomer. Interacts with FZD5. Interacts with FZD8. Interacts with GRID2 and BECN1. Interacts with CSPG5. Interacts with CLCN3. Interacts with STX6. Interacts with CFTR. Interacts with ASIC3. Interacts with GOLGA3. Interacts with NLGN1. Interacts with RHOQ. Interacts with MARCHF2; the interaction leads to CFTR ubiquitination and degradation. May interact with CACNG2. Interacts with CCDC62. In terms of tissue distribution, ubiquitously expressed (at protein level). Expressed in dorsal root glanglion (DRG), spinal cord and brain. Isoform 1 is preferentially expressed in whole brain (at protein level) and cerebellum. Expressed in spermatocytes and spermatides but not in Sertoli cells and spermatogonia.

The protein localises to the cytoplasm. Its subcellular location is the golgi apparatus membrane. It is found in the golgi apparatus. The protein resides in the trans-Golgi network membrane. It localises to the synapse. The protein localises to the postsynaptic density. Its subcellular location is the cell projection. It is found in the dendrite. In terms of biological role, plays a role in intracellular protein trafficking and degradation. May regulate CFTR chloride currents and acid-induced ASIC3 currents by modulating cell surface expression of both channels. May also regulate the intracellular trafficking of the ADR1B receptor. May play a role in autophagy. Together with MARCHF2 mediates the ubiquitination and lysosomal degradation of CFTR. Overexpression results in CFTR intracellular retention and degradation in the lysosomes. The protein is Golgi-associated PDZ and coiled-coil motif-containing protein of Mus musculus (Mouse).